Consider the following 110-residue polypeptide: Toxin HigB-2 (110 aa).

In terms of biological role, toxic component of a type II toxin-antitoxin (TA) system. Inhibits translation by cleavage of mRNA. The sequence is that of Toxin HigB-2 (higB-2) from Vibrio cholerae serotype O1 (strain ATCC 39315 / El Tor Inaba N16961).